The following is a 40-amino-acid chain: uncharacterized protein (40 aa).

A helical transmembrane segment spans residues 20–37 (TYLYWTAVTAAYLTYLTI).

It is found in the membrane. This is an uncharacterized protein from Archaeoglobus fulgidus (strain ATCC 49558 / DSM 4304 / JCM 9628 / NBRC 100126 / VC-16).